A 166-amino-acid polypeptide reads, in one-letter code: Early E3 18.5 kDa glycoprotein (166 aa).

An N-terminal signal peptide occupies residues 1–19 (MGPILVLLVLLSLLEPGSA). Over 20–131 (NYDPCLDFDP…SKDNIVTFSI (112 aa)) the chain is Lumenal. A glycan (N-linked (GlcNAc...) asparagine; by host) is linked at asparagine 31. 2 cysteine pairs are disulfide-bonded: cysteine 32/cysteine 50 and cysteine 44/cysteine 106. 3 N-linked (GlcNAc...) asparagine; by host glycosylation sites follow: asparagine 63, asparagine 67, and asparagine 97. A helical membrane pass occupies residues 132 to 152 (AYCLCACLLTALLCVCIHLLV). The Cytoplasmic segment spans residues 153-166 (TTRIKNANNKEKMP). The Di-lysine motif signature appears at 162–166 (KEKMP).

It belongs to the adenoviridae E19 family. Post-translationally, both disulfide bonds are absolutely critical for the interaction with MHC antigens. N-glycosylated; high-mannose.

It localises to the host endoplasmic reticulum membrane. Its function is as follows. Binds and retains class I heavy chains in the endoplasmic reticulum during the early period of virus infection, thereby impairing their transport to the cell surface. Also delays the expression of class I alleles that it cannot affect by direct retention. Binds transporters associated with antigen processing (TAP) and acts as a tapasin inhibitor, preventing class I/TAP association. In consequence, infected cells are masked for immune recognition by cytotoxic T-lymphocytes. The protein is Early E3 18.5 kDa glycoprotein of Human adenovirus B serotype 11 (strain Slobiski) (HAdV-11).